We begin with the raw amino-acid sequence, 199 residues long: Recombination protein RecR (199 aa).

A C4-type zinc finger spans residues Cys57–Cys72. Positions Gly81–Pro176 constitute a Toprim domain.

This sequence belongs to the RecR family.

May play a role in DNA repair. It seems to be involved in an RecBC-independent recombinational process of DNA repair. It may act with RecF and RecO. This Shewanella denitrificans (strain OS217 / ATCC BAA-1090 / DSM 15013) protein is Recombination protein RecR.